An 849-amino-acid chain; its full sequence is DNA mismatch repair protein MutS (849 aa).

602–609 is a binding site for ATP; the sequence is GPNMSGKS.

It belongs to the DNA mismatch repair MutS family.

This protein is involved in the repair of mismatches in DNA. It is possible that it carries out the mismatch recognition step. This protein has a weak ATPase activity. The sequence is that of DNA mismatch repair protein MutS from Streptococcus sanguinis (strain SK36).